The chain runs to 256 residues: Leucine-rich repeat-containing protein 18 (256 aa).

LRR repeat units lie at residues 28–49 (GRKR…ILRL), 51–72 (EIDE…ISKF), 74–95 (NLRW…IGQM), 97–118 (SLLF…VELN), 122–144 (NIRT…GALK), 145–167 (ELHE…SKLP), 168–189 (KLKK…DMFV), and 194–215 (RLEN…QKCQ).

The protein localises to the cytoplasm. Functionally, may be involved in the regulation of spermatogenesis and sperm maturation. The sequence is that of Leucine-rich repeat-containing protein 18 (Lrrc18) from Rattus norvegicus (Rat).